A 597-amino-acid chain; its full sequence is HECT-type ubiquitin ligase-interacting protein creD (597 aa).

Disordered regions lie at residues 375 to 398, 439 to 492, and 576 to 597; these read EVDP…GTLS, ASEH…MATP, and SRSH…RGRA. Over residues 452 to 466 the composition is skewed to polar residues; sequence GPPSGSNTHGSNTHA. The span at 472–483 shows a compositional bias: basic and acidic residues; the sequence is LSRRASDEDVHD.

Belongs to the arrestin family. In terms of assembly, interacts with hulA.

In terms of biological role, component of the regulatory network controlling carbon source utilization through ubiquitination and deubiquitination involving creA, creB, creC, creD and acrB. May be involved in signaling by recognizing appropriately phosphorylated substrates via its arrestin domains and then recruit a HECT-type ubiquitin ligase such as hulA, leading to ubiquitination of the substrate, providing a link between ubiquitination and phosphorylation in protein regulation and stability. This chain is HECT-type ubiquitin ligase-interacting protein creD (creD), found in Emericella nidulans (strain FGSC A4 / ATCC 38163 / CBS 112.46 / NRRL 194 / M139) (Aspergillus nidulans).